Reading from the N-terminus, the 260-residue chain is HTH-type transcriptional repressor NanR (260 aa).

Residues 1-21 form a disordered region; it reads MSAFDHSSDDTQETIGNSLRR. The 69-residue stretch at 27–95 folds into the HTH gntR-type domain; the sequence is KKLSEMVEEE…NGERARVSRP (69 aa). The segment at residues 55-74 is a DNA-binding region (H-T-H motif); that stretch reads ERELMAFFNVGRPSVREALA.

This sequence belongs to the NanR family.

Transcriptional repressor that controls expression of the genes required for the catabolism of sialic acids. This chain is HTH-type transcriptional repressor NanR, found in Klebsiella aerogenes (strain ATCC 13048 / DSM 30053 / CCUG 1429 / JCM 1235 / KCTC 2190 / NBRC 13534 / NCIMB 10102 / NCTC 10006 / CDC 819-56) (Enterobacter aerogenes).